Consider the following 332-residue polypeptide: UDP-galactose/UDP-glucose transporter 1 (332 aa).

A run of 8 helical transmembrane segments spans residues 11–31 (ILLL…QGVL), 49–69 (HLAF…YIMI), 80–100 (APWW…AMGI), 112–132 (VLAK…VYGI), 135–155 (TFPE…FALL), 206–226 (IMLG…FGLP), 252–272 (ICGA…GSLA), and 301–317 (WGCV…QIYL). Residues 327–332 (KKKQKS) carry the Di-lysine motif motif.

The protein belongs to the nucleotide-sugar transporter family. UDP-galactose:UMP antiporter (TC 2.A.7.11) subfamily.

The protein resides in the endoplasmic reticulum membrane. Its function is as follows. Essential sugar transporter required for the transport of UDP-galactose and UDP-glucose from the cytoplasm into the Golgi and the endoplasmic reticulum, to ensure quality control of protein folding. Essential for pollen development and involved in embryo sac progress. This is UDP-galactose/UDP-glucose transporter 1 from Arabidopsis thaliana (Mouse-ear cress).